Reading from the N-terminus, the 1304-residue chain is Neuronal cell adhesion molecule (1304 aa).

The signal sequence occupies residues 1–24 (MQLKIMPKKKRLSAGRVPLILFLC). Residues 25–1167 (QMISALEVPL…ASRQVDIATQ (1143 aa)) are Extracellular-facing. 2 consecutive Ig-like domains span residues 46-134 (PTIT…AAVS) and 141-235 (PSRS…QPIS). 2 disulfides stabilise this stretch: Cys-68–Cys-123 and Cys-167–Cys-218. A glycan (N-linked (GlcNAc...) asparagine) is linked at Asn-83. Residues Asn-223, Asn-245, Asn-251, Asn-276, and Asn-314 are each glycosylated (N-linked (GlcNAc...) asparagine). Ig-like domains lie at 267–356 (PPTF…ISVR), 361–448 (PYWI…AFVN), 454–541 (PRIL…VHLE), and 545–632 (PTWI…AVLS). Intrachain disulfides connect Cys-292/Cys-340 and Cys-382/Cys-432. Residues Asn-433 and Asn-507 are each glycosylated (N-linked (GlcNAc...) asparagine). Intrachain disulfides connect Cys-476–Cys-525 and Cys-567–Cys-616. Asn-619, Asn-716, and Asn-802 each carry an N-linked (GlcNAc...) asparagine glycan. Fibronectin type-III domains are found at residues 649–744 (PPFD…TKAS), 746–843 (PDKN…SGED), 848–950 (APGN…TPEG), 954–1051 (APSS…VDEA), and 1064–1156 (QAVN…TGPA). A glycan (N-linked (GlcNAc...) (complex) asparagine) is linked at Asn-858. N-linked (GlcNAc...) asparagine glycosylation is found at Asn-993, Asn-1009, Asn-1019, Asn-1072, Asn-1083, and Asn-1115. Residues 1168-1190 (GWFIGLMCAVALLILILLIVCFI) traverse the membrane as a helical segment. The Cytoplasmic segment spans residues 1191 to 1304 (RRNKGGKYPV…SPVNAMNSFV (114 aa)). Over residues 1199–1219 (PVKEKEDAHADPEIQPMKEDD) the composition is skewed to basic and acidic residues. Residues 1199-1304 (PVKEKEDAHA…SPVNAMNSFV (106 aa)) are disordered. Phosphothreonine is present on Thr-1221. A Phosphotyrosine modification is found at Tyr-1225. Ser-1226 is subject to Phosphoserine. The span at 1241–1250 (PSDRTVKKED) shows a compositional bias: basic and acidic residues. Residues Ser-1251, Ser-1254, Ser-1271, Ser-1290, Ser-1291, and Ser-1295 each carry the phosphoserine modification. Residues 1288-1304 (NESSEAPSPVNAMNSFV) are compositionally biased toward polar residues.

The protein belongs to the immunoglobulin superfamily. L1/neurofascin/NgCAM family. Constituent of a NFASC/NRCAM/ankyrin-G complex. Detected in a complex with CNTN1 and PTPRB. Interacts with GLDN/gliomedin. Interacts with MYOC. In terms of tissue distribution, detected in all the examined tissues. In the brain it was detected in the amygdala, caudate nucleus, corpus callosum, hippocampus, hypothalamus, substantia nigra, subthalamic nucleus and thalamus.

It localises to the cell membrane. Its subcellular location is the cell projection. It is found in the axon. The protein localises to the secreted. Functionally, cell adhesion protein that is required for normal responses to cell-cell contacts in brain and in the peripheral nervous system. Plays a role in neurite outgrowth in response to contactin binding. Plays a role in mediating cell-cell contacts between Schwann cells and axons. Plays a role in the formation and maintenance of the nodes of Ranvier on myelinated axons. Nodes of Ranvier contain clustered sodium channels that are crucial for the saltatory propagation of action potentials along myelinated axons. During development, nodes of Ranvier are formed by the fusion of two heminodes. Required for normal clustering of sodium channels at heminodes; not required for the formation of mature nodes with normal sodium channel clusters. Required, together with GLDN, for maintaining NFASC and sodium channel clusters at mature nodes of Ranvier. In Homo sapiens (Human), this protein is Neuronal cell adhesion molecule (NRCAM).